We begin with the raw amino-acid sequence, 213 residues long: PRA1 family protein B2 (213 aa).

Residues 1–21 are disordered; that stretch reads MSSSPAILPVTNQQAATQSQP. Transmembrane regions (helical) follow at residues 75–94, 98–117, 137–157, 161–181, and 190–210; these read LAYF…AFSL, PFSL…LYLF, LLGL…GSLL, LTIG…DDLF, and AGLL…SVVA.

Belongs to the PRA1 family. Interacts with PRA1B1, PRA1B3, PRA1B4, PRA1B5, PRA1B6 and PRA1E.

It is found in the endosome membrane. May be involved in both secretory and endocytic intracellular trafficking in the endosomal/prevacuolar compartments. The protein is PRA1 family protein B2 (PRA1B2) of Arabidopsis thaliana (Mouse-ear cress).